Consider the following 487-residue polypeptide: Malonate-semialdehyde dehydrogenase (487 aa).

Residues alanine 150, phenylalanine 152, lysine 176, glutamate 179, arginine 180, serine 229, and threonine 251 each contribute to the NAD(+) site. The active-site Nucleophile is cysteine 284. Glutamate 382 is an NAD(+) binding site.

The protein belongs to the aldehyde dehydrogenase family. IolA subfamily. As to quaternary structure, homotetramer.

The enzyme catalyses 3-oxopropanoate + NAD(+) + CoA + H2O = hydrogencarbonate + acetyl-CoA + NADH + H(+). It catalyses the reaction 2-methyl-3-oxopropanoate + NAD(+) + CoA + H2O = propanoyl-CoA + hydrogencarbonate + NADH + H(+). It functions in the pathway polyol metabolism; myo-inositol degradation into acetyl-CoA; acetyl-CoA from myo-inositol: step 7/7. Catalyzes the oxidation of malonate semialdehyde (MSA) and methylmalonate semialdehyde (MMSA) into acetyl-CoA and propanoyl-CoA, respectively. Is involved in a myo-inositol catabolic pathway. Bicarbonate, and not CO2, is the end-product of the enzymatic reaction. The sequence is that of Malonate-semialdehyde dehydrogenase from Bacillus velezensis (strain DSM 23117 / BGSC 10A6 / LMG 26770 / FZB42) (Bacillus amyloliquefaciens subsp. plantarum).